The primary structure comprises 291 residues: Lys-63-specific deubiquitinase BRCC36 (291 aa).

N-acetylalanine is present on Ala-2. One can recognise an MPN domain in the interval 12–179 (VHLESDAFLV…YTCFQSVQAQ (168 aa)). Zn(2+) contacts are provided by His-122, His-124, and Asp-135. The JAMM motif motif lies at 122–135 (HSHPHITVWPSHVD). The residue at position 233 (Ser-233) is a Phosphoserine.

Belongs to the peptidase M67A family. BRCC36 subfamily. In terms of assembly, component of the ARISC complex, at least composed of UIMC1/RAP80, ABRAXAS1, BRCC3/BRCC36, BABAM2 and BABAM1/NBA1. Component of the BRCA1-A complex, at least composed of BRCA1, BARD1, UIMC1/RAP80, ABRAXAS1, BRCC3/BRCC36, BABAM2 and BABAM1/NBA1. In the BRCA1-A complex, interacts directly with ABRAXAS1 and BABAM2. Component of the BRISC complex, at least composed of ABRAXAS2, BRCC3/BRCC36, BABAM2 and BABAM1/NBA1. Identified in a complex with SHMT2 and the other subunits of the BRISC complex. In the BRISC complex, interacts directly with ABRAXAS2. Identified in a complex with ABRAXAS2 and NUMA1. The BRISC complex interacts with the CSN complex. Component of the BRCA1/BRCA2 containing complex (BRCC), which also contains BRCA1, BRCA2, BARD1, BABAM2 and RAD51. BRCC is a ubiquitin E3 ligase complex that enhances cellular survival following DNA damage. Interacts with BRCA1. Binds polyubiquitin. Interacts with PWWP2B. Interacts with HDAC1; this interaction is enhanced in the presence of PWWP2B. Zn(2+) serves as cofactor.

Its subcellular location is the nucleus. The protein resides in the cytoplasm. The protein localises to the cytoskeleton. It localises to the spindle pole. Its function is as follows. Metalloprotease that specifically cleaves 'Lys-63'-linked polyubiquitin chains. Does not have activity toward 'Lys-48'-linked polyubiquitin chains. Component of the BRCA1-A complex, a complex that specifically recognizes 'Lys-63'-linked ubiquitinated histones H2A and H2AX at DNA lesions sites, leading to target the BRCA1-BARD1 heterodimer to sites of DNA damage at double-strand breaks (DSBs). In the BRCA1-A complex, it specifically removes 'Lys-63'-linked ubiquitin on histones H2A and H2AX, antagonizing the RNF8-dependent ubiquitination at double-strand breaks (DSBs). Catalytic subunit of the BRISC complex, a multiprotein complex that specifically cleaves 'Lys-63'-linked ubiquitin in various substrates. Mediates the specific 'Lys-63'-specific deubiquitination associated with the COP9 signalosome complex (CSN), via the interaction of the BRISC complex with the CSN complex. The BRISC complex is required for normal mitotic spindle assembly and microtubule attachment to kinetochores via its role in deubiquitinating NUMA1. Plays a role in interferon signaling via its role in the deubiquitination of the interferon receptor IFNAR1; deubiquitination increases IFNAR1 activity by enhancing its stability and cell surface expression. Acts as a regulator of the NLRP3 inflammasome by mediating deubiquitination of NLRP3, leading to NLRP3 inflammasome assembly. Down-regulates the response to bacterial lipopolysaccharide (LPS) via its role in IFNAR1 deubiquitination. Deubiquitinates HDAC1 and PWWP2B leading to their stabilization. The polypeptide is Lys-63-specific deubiquitinase BRCC36 (Brcc3) (Rattus norvegicus (Rat)).